Here is a 73-residue protein sequence, read N- to C-terminus: UPF0435 protein BH2488 (73 aa).

This sequence belongs to the UPF0435 family.

In Halalkalibacterium halodurans (strain ATCC BAA-125 / DSM 18197 / FERM 7344 / JCM 9153 / C-125) (Bacillus halodurans), this protein is UPF0435 protein BH2488.